The primary structure comprises 341 residues: Serpentine receptor class epsilon-12 (341 aa).

Transmembrane regions (helical) follow at residues 30 to 50 (TAFY…LFSA), 57 to 77 (FTLV…AIIV), 101 to 121 (AMTF…FSIL), 140 to 160 (YISY…AILL), 167 to 187 (IFVV…NQFL), 230 to 250 (LNFI…SVLF), and 262 to 282 (ICSL…PQIM).

It belongs to the nematode receptor-like protein sre family.

Its subcellular location is the membrane. In Caenorhabditis elegans, this protein is Serpentine receptor class epsilon-12 (sre-12).